The following is a 367-amino-acid chain: Phosphoribosylaminoimidazole-succinocarboxamide synthase (367 aa).

Belongs to the SAICAR synthetase family.

The enzyme catalyses 5-amino-1-(5-phospho-D-ribosyl)imidazole-4-carboxylate + L-aspartate + ATP = (2S)-2-[5-amino-1-(5-phospho-beta-D-ribosyl)imidazole-4-carboxamido]succinate + ADP + phosphate + 2 H(+). It functions in the pathway purine metabolism; IMP biosynthesis via de novo pathway; 5-amino-1-(5-phospho-D-ribosyl)imidazole-4-carboxamide from 5-amino-1-(5-phospho-D-ribosyl)imidazole-4-carboxylate: step 1/2. This chain is Phosphoribosylaminoimidazole-succinocarboxamide synthase, found in Colwellia psychrerythraea (strain 34H / ATCC BAA-681) (Vibrio psychroerythus).